The sequence spans 859 residues: Envelope glycoprotein (859 aa).

Positions 1–6 are excised as a propeptide; it reads MVSIAF. The Extracellular portion of the chain corresponds to 7–614; that stretch reads YGGIPGGIST…KDLWSHIGNW (608 aa). Asn-40, Asn-112, Asn-141, Asn-148, Asn-186, Asn-214, Asn-233, Asn-244, Asn-340, Asn-368, Asn-399, Asn-406, and Asn-411 each carry an N-linked (GlcNAc...) asparagine; by host glycan. The fusion peptide stretch occupies residues 446-466; the sequence is FGISAIVAAIVAATAIAASAT. N-linked (GlcNAc...) asparagine; by host glycosylation is found at Asn-483 and Asn-490. The immunosuppression stretch occupies residues 498–513; that stretch reads LIERQIKILYAMILQT. Asn-550 and Asn-557 each carry an N-linked (GlcNAc...) asparagine; by host glycan. Coiled coils occupy residues 576–624 and 663–699; these read ILTT…SIIK and KKFHHKHASREDTWDQAQHNIHLAGVTGGSGDKYYKQ. Residues 615–635 traverse the membrane as a helical segment; the sequence is IPGLGASIIKYIVMFLLIYLL. At 636-859 the chain is on the cytoplasmic side; it reads LTSSPKILRA…TSHVSMPQYV (224 aa).

The mature envelope protein (Env) consists of a trimer of SU-TM heterodimers attached by noncovalent interactions or by a labile interchain disulfide bond. Post-translationally, specific enzymatic cleavages in vivo yield mature proteins. Envelope glycoproteins are synthesized as an inactive precursor that is N-glycosylated and processed likely by host cell furin or by a furin-like protease in the Golgi to yield the mature SU and TM proteins. The cleavage site between SU and TM requires the minimal sequence [KR]-X-[KR]-R.

Its subcellular location is the virion membrane. The protein resides in the host cell membrane. Its function is as follows. The surface protein (SU) attaches the virus to the host cell by binding to its receptor. This interaction triggers the refolding of the transmembrane protein (TM) and is thought to activate its fusogenic potential by unmasking its fusion peptide. Fusion occurs at the host cell plasma membrane. Functionally, the transmembrane protein (TM) acts as a class I viral fusion protein. Under the current model, the protein has at least 3 conformational states: pre-fusion native state, pre-hairpin intermediate state, and post-fusion hairpin state. During viral and target cell membrane fusion, the coiled coil regions (heptad repeats) assume a trimer-of-hairpins structure, positioning the fusion peptide in close proximity to the C-terminal region of the ectodomain. The formation of this structure appears to drive apposition and subsequent fusion of viral and target cell membranes. Membranes fusion leads to delivery of the nucleocapsid into the cytoplasm. This is Envelope glycoprotein (env) from Equus asinus (Donkey).